Reading from the N-terminus, the 159-residue chain is Ribosomal RNA large subunit methyltransferase H (159 aa).

2 residues coordinate S-adenosyl-L-methionine: L76 and G108.

Belongs to the RNA methyltransferase RlmH family. In terms of assembly, homodimer.

It is found in the cytoplasm. It carries out the reaction pseudouridine(1915) in 23S rRNA + S-adenosyl-L-methionine = N(3)-methylpseudouridine(1915) in 23S rRNA + S-adenosyl-L-homocysteine + H(+). Its function is as follows. Specifically methylates the pseudouridine at position 1915 (m3Psi1915) in 23S rRNA. This is Ribosomal RNA large subunit methyltransferase H from Limosilactobacillus reuteri (strain DSM 20016) (Lactobacillus reuteri).